The sequence spans 447 residues: Probable glycine dehydrogenase (decarboxylating) subunit 1 (447 aa).

The protein belongs to the GcvP family. N-terminal subunit subfamily. The glycine cleavage system is composed of four proteins: P, T, L and H. In this organism, the P 'protein' is a heterodimer of two subunits.

The catalysed reaction is N(6)-[(R)-lipoyl]-L-lysyl-[glycine-cleavage complex H protein] + glycine + H(+) = N(6)-[(R)-S(8)-aminomethyldihydrolipoyl]-L-lysyl-[glycine-cleavage complex H protein] + CO2. The glycine cleavage system catalyzes the degradation of glycine. The P protein binds the alpha-amino group of glycine through its pyridoxal phosphate cofactor; CO(2) is released and the remaining methylamine moiety is then transferred to the lipoamide cofactor of the H protein. The sequence is that of Probable glycine dehydrogenase (decarboxylating) subunit 1 from Bacillus mycoides (strain KBAB4) (Bacillus weihenstephanensis).